The sequence spans 580 residues: Proline--tRNA ligase (580 aa).

Belongs to the class-II aminoacyl-tRNA synthetase family. ProS type 1 subfamily. In terms of assembly, homodimer.

It localises to the cytoplasm. It catalyses the reaction tRNA(Pro) + L-proline + ATP = L-prolyl-tRNA(Pro) + AMP + diphosphate. Its function is as follows. Catalyzes the attachment of proline to tRNA(Pro) in a two-step reaction: proline is first activated by ATP to form Pro-AMP and then transferred to the acceptor end of tRNA(Pro). As ProRS can inadvertently accommodate and process non-cognate amino acids such as alanine and cysteine, to avoid such errors it has two additional distinct editing activities against alanine. One activity is designated as 'pretransfer' editing and involves the tRNA(Pro)-independent hydrolysis of activated Ala-AMP. The other activity is designated 'posttransfer' editing and involves deacylation of mischarged Ala-tRNA(Pro). The misacylated Cys-tRNA(Pro) is not edited by ProRS. The polypeptide is Proline--tRNA ligase (Mycobacteroides abscessus (strain ATCC 19977 / DSM 44196 / CCUG 20993 / CIP 104536 / JCM 13569 / NCTC 13031 / TMC 1543 / L948) (Mycobacterium abscessus)).